The primary structure comprises 253 residues: ATP synthase subunit a (253 aa).

Helical transmembrane passes span 34–54 (SSLF…LSFY), 89–109 (YFPF…IGMI), 118–138 (HIVF…LIGI), 156–178 (LAIV…FTLS), 203–223 (LSAG…LLAL), and 226–246 (LELA…CIYL).

This sequence belongs to the ATPase A chain family. F-type ATPases have 2 components, CF(1) - the catalytic core - and CF(0) - the membrane proton channel. CF(1) has five subunits: alpha(3), beta(3), gamma(1), delta(1), epsilon(1). CF(0) has three main subunits: a, b and c.

It is found in the mitochondrion inner membrane. Its function is as follows. Mitochondrial membrane ATP synthase (F(1)F(0) ATP synthase or Complex V) produces ATP from ADP in the presence of a proton gradient across the membrane which is generated by electron transport complexes of the respiratory chain. F-type ATPases consist of two structural domains, F(1) - containing the extramembraneous catalytic core and F(0) - containing the membrane proton channel, linked together by a central stalk and a peripheral stalk. During catalysis, ATP synthesis in the catalytic domain of F(1) is coupled via a rotary mechanism of the central stalk subunits to proton translocation. Key component of the proton channel; it may play a direct role in the translocation of protons across the membrane. The polypeptide is ATP synthase subunit a (ATP6) (Chondrus crispus (Carrageen Irish moss)).